We begin with the raw amino-acid sequence, 414 residues long: Peptide chain release factor subunit 1 (414 aa).

The protein belongs to the eukaryotic release factor 1 family. As to quaternary structure, heterodimer of two subunits, one of which binds GTP.

The protein resides in the cytoplasm. Its function is as follows. Directs the termination of nascent peptide synthesis (translation) in response to the termination codons UAA, UAG and UGA. The polypeptide is Peptide chain release factor subunit 1 (prf1) (Pyrococcus abyssi (strain GE5 / Orsay)).